We begin with the raw amino-acid sequence, 343 residues long: S-adenosylmethionine:tRNA ribosyltransferase-isomerase (343 aa).

Belongs to the QueA family. In terms of assembly, monomer.

Its subcellular location is the cytoplasm. It catalyses the reaction 7-aminomethyl-7-carbaguanosine(34) in tRNA + S-adenosyl-L-methionine = epoxyqueuosine(34) in tRNA + adenine + L-methionine + 2 H(+). The protein operates within tRNA modification; tRNA-queuosine biosynthesis. Its function is as follows. Transfers and isomerizes the ribose moiety from AdoMet to the 7-aminomethyl group of 7-deazaguanine (preQ1-tRNA) to give epoxyqueuosine (oQ-tRNA). This chain is S-adenosylmethionine:tRNA ribosyltransferase-isomerase, found in Hydrogenobaculum sp. (strain Y04AAS1).